The chain runs to 556 residues: Glutamine--tRNA ligase (556 aa).

Positions 34-44 (PEPNGYLHIGH) match the 'HIGH' region motif. Residues 35–37 (EPN) and 41–47 (HIGHAKS) contribute to the ATP site. L-glutamine-binding residues include aspartate 67 and tyrosine 212. ATP contacts are provided by residues threonine 231, 263 to 264 (RL), and 271 to 273 (MSK). The 'KMSKS' region signature appears at 270 to 274 (VMSKR).

Belongs to the class-I aminoacyl-tRNA synthetase family. In terms of assembly, monomer.

It localises to the cytoplasm. The catalysed reaction is tRNA(Gln) + L-glutamine + ATP = L-glutaminyl-tRNA(Gln) + AMP + diphosphate. The sequence is that of Glutamine--tRNA ligase from Nitrosomonas europaea (strain ATCC 19718 / CIP 103999 / KCTC 2705 / NBRC 14298).